A 99-amino-acid chain; its full sequence is Aspartyl/glutamyl-tRNA(Asn/Gln) amidotransferase subunit C (99 aa).

It belongs to the GatC family. In terms of assembly, heterotrimer of A, B and C subunits.

The enzyme catalyses L-glutamyl-tRNA(Gln) + L-glutamine + ATP + H2O = L-glutaminyl-tRNA(Gln) + L-glutamate + ADP + phosphate + H(+). It carries out the reaction L-aspartyl-tRNA(Asn) + L-glutamine + ATP + H2O = L-asparaginyl-tRNA(Asn) + L-glutamate + ADP + phosphate + 2 H(+). Functionally, allows the formation of correctly charged Asn-tRNA(Asn) or Gln-tRNA(Gln) through the transamidation of misacylated Asp-tRNA(Asn) or Glu-tRNA(Gln) in organisms which lack either or both of asparaginyl-tRNA or glutaminyl-tRNA synthetases. The reaction takes place in the presence of glutamine and ATP through an activated phospho-Asp-tRNA(Asn) or phospho-Glu-tRNA(Gln). The chain is Aspartyl/glutamyl-tRNA(Asn/Gln) amidotransferase subunit C from Mycobacterium leprae (strain Br4923).